The sequence spans 199 residues: ATP-dependent Clp protease proteolytic subunit (199 aa).

Ser-99 (nucleophile) is an active-site residue. The active site involves His-124.

The protein belongs to the peptidase S14 family. In terms of assembly, fourteen ClpP subunits assemble into 2 heptameric rings which stack back to back to give a disk-like structure with a central cavity, resembling the structure of eukaryotic proteasomes.

The protein resides in the cytoplasm. It carries out the reaction Hydrolysis of proteins to small peptides in the presence of ATP and magnesium. alpha-casein is the usual test substrate. In the absence of ATP, only oligopeptides shorter than five residues are hydrolyzed (such as succinyl-Leu-Tyr-|-NHMec, and Leu-Tyr-Leu-|-Tyr-Trp, in which cleavage of the -Tyr-|-Leu- and -Tyr-|-Trp bonds also occurs).. In terms of biological role, cleaves peptides in various proteins in a process that requires ATP hydrolysis. Has a chymotrypsin-like activity. Plays a major role in the degradation of misfolded proteins. In Moorella thermoacetica (strain ATCC 39073 / JCM 9320), this protein is ATP-dependent Clp protease proteolytic subunit.